The sequence spans 239 residues: Hydroxyacylglutathione hydrolase (239 aa).

H54, H56, D58, H59, H112, D131, and H169 together coordinate Zn(2+).

The protein belongs to the metallo-beta-lactamase superfamily. Glyoxalase II family. In terms of assembly, monomer. The cofactor is Zn(2+).

It carries out the reaction an S-(2-hydroxyacyl)glutathione + H2O = a 2-hydroxy carboxylate + glutathione + H(+). It functions in the pathway secondary metabolite metabolism; methylglyoxal degradation; (R)-lactate from methylglyoxal: step 2/2. Functionally, thiolesterase that catalyzes the hydrolysis of S-D-lactoyl-glutathione to form glutathione and D-lactic acid. The protein is Hydroxyacylglutathione hydrolase of Pelagibacter ubique (strain HTCC1062).